Reading from the N-terminus, the 255-residue chain is Hydroxyacylglutathione hydrolase (255 aa).

Positions 56, 58, 60, 61, 114, 133, and 171 each coordinate Zn(2+).

The protein belongs to the metallo-beta-lactamase superfamily. Glyoxalase II family. In terms of assembly, monomer. Requires Zn(2+) as cofactor.

The enzyme catalyses an S-(2-hydroxyacyl)glutathione + H2O = a 2-hydroxy carboxylate + glutathione + H(+). The protein operates within secondary metabolite metabolism; methylglyoxal degradation; (R)-lactate from methylglyoxal: step 2/2. Functionally, thiolesterase that catalyzes the hydrolysis of S-D-lactoyl-glutathione to form glutathione and D-lactic acid. The protein is Hydroxyacylglutathione hydrolase of Cereibacter sphaeroides (strain ATCC 17023 / DSM 158 / JCM 6121 / CCUG 31486 / LMG 2827 / NBRC 12203 / NCIMB 8253 / ATH 2.4.1.) (Rhodobacter sphaeroides).